Reading from the N-terminus, the 190-residue chain is MPKPRNIAAVKQLTALFQESNAAVLTEYRGLSVAQLTQLRTALGPDTTYAVLKNTLTTIAAKEAGVTAFEGQLSGPSAIAFITGDPVEAAKGLRDFAKTNPQLIVKSGMLEGRAISAADVTALADLESREVLLSKVAGVLKATQSKAAALFQAPLSKTVRTVEALREKQAAGAPAEAAPVEAPAAETVDA.

The tract at residues 170–190 is disordered; that stretch reads AAGAPAEAAPVEAPAAETVDA.

This sequence belongs to the universal ribosomal protein uL10 family. In terms of assembly, part of the ribosomal stalk of the 50S ribosomal subunit. The N-terminus interacts with L11 and the large rRNA to form the base of the stalk. The C-terminus forms an elongated spine to which L12 dimers bind in a sequential fashion forming a multimeric L10(L12)X complex.

Its function is as follows. Forms part of the ribosomal stalk, playing a central role in the interaction of the ribosome with GTP-bound translation factors. The sequence is that of Large ribosomal subunit protein uL10 from Kineococcus radiotolerans (strain ATCC BAA-149 / DSM 14245 / SRS30216).